We begin with the raw amino-acid sequence, 804 residues long: Phenylalanine--tRNA ligase beta subunit (804 aa).

A tRNA-binding domain is found at 39 to 155 (AEGLKKIVVG…ADVKPGEEVY (117 aa)). Residues 408–483 (RNPSVVKTTV…RIYGYDNLKS (76 aa)) enclose the B5 domain. Positions 461, 467, 470, and 471 each coordinate Mg(2+). The region spanning 711–804 (PKFPAIERDL…LKESLKIKVR (94 aa)) is the FDX-ACB domain.

Belongs to the phenylalanyl-tRNA synthetase beta subunit family. Type 1 subfamily. In terms of assembly, tetramer of two alpha and two beta subunits. Requires Mg(2+) as cofactor.

It localises to the cytoplasm. It carries out the reaction tRNA(Phe) + L-phenylalanine + ATP = L-phenylalanyl-tRNA(Phe) + AMP + diphosphate + H(+). The sequence is that of Phenylalanine--tRNA ligase beta subunit from Lactobacillus johnsonii (strain CNCM I-12250 / La1 / NCC 533).